A 343-amino-acid polypeptide reads, in one-letter code: Tribbles homolog 2 (343 aa).

A disordered region spans residues 25–50; it reads EELSSIRSAEPSQSFSPNLGSPSPPE. A compositionally biased stretch (polar residues) spans 29 to 45; it reads SIRSAEPSQSFSPNLGS. The 248-residue stretch at 61-308 folds into the Protein kinase domain; sequence IGKYLLLEPL…SQEILDHPWF (248 aa).

This sequence belongs to the protein kinase superfamily. CAMK Ser/Thr protein kinase family. Tribbles subfamily.

It is found in the cytoplasm. The protein resides in the cytoskeleton. Its function is as follows. Interacts with MAPK kinases and regulates activation of MAP kinases. Does not display kinase activity. This is Tribbles homolog 2 from Mus musculus (Mouse).